Consider the following 172-residue polypeptide: MKFAQPHNPLLPSVPDIVFSAIVLAIVLPFFWWFVIPRISKLLSDRSSLIEGKISEAASAHARALETLELRKQQLDEAKSEASQIRQEARDDAQLILQQARETADETAERVMLHAREQIQAEKAAALLSLRSEIATLALAAAGKAVSEKLDDDKKSRELVSASIAKMAEDAG.

Residues 17–37 (IVFSAIVLAIVLPFFWWFVIP) form a helical membrane-spanning segment.

It belongs to the ATPase B chain family. As to quaternary structure, F-type ATPases have 2 components, F(1) - the catalytic core - and F(0) - the membrane proton channel. F(1) has five subunits: alpha(3), beta(3), gamma(1), delta(1), epsilon(1). F(0) has three main subunits: a(1), b(2) and c(10-14). The alpha and beta chains form an alternating ring which encloses part of the gamma chain. F(1) is attached to F(0) by a central stalk formed by the gamma and epsilon chains, while a peripheral stalk is formed by the delta and b chains.

The protein localises to the cell membrane. Functionally, f(1)F(0) ATP synthase produces ATP from ADP in the presence of a proton or sodium gradient. F-type ATPases consist of two structural domains, F(1) containing the extramembraneous catalytic core and F(0) containing the membrane proton channel, linked together by a central stalk and a peripheral stalk. During catalysis, ATP synthesis in the catalytic domain of F(1) is coupled via a rotary mechanism of the central stalk subunits to proton translocation. Component of the F(0) channel, it forms part of the peripheral stalk, linking F(1) to F(0). The polypeptide is ATP synthase subunit b (Tropheryma whipplei (strain TW08/27) (Whipple's bacillus)).